The following is a 104-amino-acid chain: UPF0145 protein Hlac_1015 (104 aa).

The protein belongs to the UPF0145 family.

This is UPF0145 protein Hlac_1015 from Halorubrum lacusprofundi (strain ATCC 49239 / DSM 5036 / JCM 8891 / ACAM 34).